Here is a 540-residue protein sequence, read N- to C-terminus: IQ motif and ankyrin repeat domain-containing protein 1 (540 aa).

Residues methionine 1–alanine 17 show a composition bias toward low complexity. The segment at methionine 1–glutamate 62 is disordered. The IQ domain maps to glutamate 62–glutamate 91. ANK repeat units lie at residues histidine 191 to threonine 220 and phenylalanine 224 to methionine 253. The stretch at leucine 281–glutamate 388 forms a coiled coil.

The polypeptide is IQ motif and ankyrin repeat domain-containing protein 1 (Mus musculus (Mouse)).